The sequence spans 360 residues: Phosphoserine aminotransferase (360 aa).

L-glutamate is bound at residue arginine 41. 4 residues coordinate pyridoxal 5'-phosphate: tryptophan 101, threonine 152, aspartate 172, and glutamine 195. An N6-(pyridoxal phosphate)lysine modification is found at lysine 196. Asparagine 237–threonine 238 contacts pyridoxal 5'-phosphate.

The protein belongs to the class-V pyridoxal-phosphate-dependent aminotransferase family. SerC subfamily. As to quaternary structure, homodimer. Pyridoxal 5'-phosphate is required as a cofactor.

It is found in the cytoplasm. It carries out the reaction O-phospho-L-serine + 2-oxoglutarate = 3-phosphooxypyruvate + L-glutamate. It catalyses the reaction 4-(phosphooxy)-L-threonine + 2-oxoglutarate = (R)-3-hydroxy-2-oxo-4-phosphooxybutanoate + L-glutamate. The protein operates within amino-acid biosynthesis; L-serine biosynthesis; L-serine from 3-phospho-D-glycerate: step 2/3. It functions in the pathway cofactor biosynthesis; pyridoxine 5'-phosphate biosynthesis; pyridoxine 5'-phosphate from D-erythrose 4-phosphate: step 3/5. In terms of biological role, catalyzes the reversible conversion of 3-phosphohydroxypyruvate to phosphoserine and of 3-hydroxy-2-oxo-4-phosphonooxybutanoate to phosphohydroxythreonine. The polypeptide is Phosphoserine aminotransferase (Burkholderia lata (strain ATCC 17760 / DSM 23089 / LMG 22485 / NCIMB 9086 / R18194 / 383)).